A 300-amino-acid chain; its full sequence is uncharacterized protein (300 aa).

3 Solcar repeats span residues 10-101, 119-199, and 212-294; these read ESQT…VKDF, GKAI…AKEY, and FQNF…LIPF. The next 6 helical transmembrane spans lie at 16–36, 70–86, 121–141, 178–198, 215–235, and 275–295; these read IVGSASAGILELSLFHPVDTI, ATSLFPGLGYAACYKIV, AIMHATAGSIVGIGEIFLLPL, TAARNAPGSFALFGGNAFAKE, FFTSIAGASASLIVSAPLDVI, and LTTGPKLVFSFTMAQTLIPFF.

The protein belongs to the mitochondrial carrier (TC 2.A.29) family.

The protein resides in the mitochondrion inner membrane. This is an uncharacterized protein from Schizosaccharomyces pombe (strain 972 / ATCC 24843) (Fission yeast).